The following is a 218-amino-acid chain: Probable transaldolase (218 aa).

Residue lysine 87 is the Schiff-base intermediate with substrate of the active site.

The protein belongs to the transaldolase family. Type 3B subfamily.

It localises to the cytoplasm. The enzyme catalyses D-sedoheptulose 7-phosphate + D-glyceraldehyde 3-phosphate = D-erythrose 4-phosphate + beta-D-fructose 6-phosphate. It participates in carbohydrate degradation; pentose phosphate pathway; D-glyceraldehyde 3-phosphate and beta-D-fructose 6-phosphate from D-ribose 5-phosphate and D-xylulose 5-phosphate (non-oxidative stage): step 2/3. Transaldolase is important for the balance of metabolites in the pentose-phosphate pathway. The protein is Probable transaldolase of Bacteroides fragilis (strain YCH46).